We begin with the raw amino-acid sequence, 250 residues long: PF03932 family protein CutC (250 aa).

It belongs to the CutC family.

It is found in the cytoplasm. This Proteus mirabilis (strain HI4320) protein is PF03932 family protein CutC.